The sequence spans 167 residues: Urease accessory protein UreE (167 aa).

The protein belongs to the UreE family.

It is found in the cytoplasm. Involved in urease metallocenter assembly. Binds nickel. Probably functions as a nickel donor during metallocenter assembly. This is Urease accessory protein UreE from Pseudomonas aeruginosa (strain LESB58).